A 482-amino-acid polypeptide reads, in one-letter code: Magnesium-dependent glutamate N-prenyltransferase (482 aa).

The Mg(2+) site is built by N351, T355, E359, and F366.

It belongs to the terpene synthase family. It depends on Mg(2+) as a cofactor.

It catalyses the reaction (2E)-geranyl diphosphate + L-glutamate = N-geranyl-L-glutamate + diphosphate. The protein operates within secondary metabolite biosynthesis. Magnesium-dependent glutamate N-prenyltransferase: part of the gene cluster that mediates the biosynthesis of domoic acid (DA) and derivatives, natural products with neurochemical activity acting as ionotropic glutamate receptor (iGluR) agonists, thus being neurotoxins causing amnesic shellfish poisoning (ASP). Catalyzes the conversion of L-glutamic acid (L-Glu) to N-geranyl-L-glutamic acid (NGG) in the presence of geranyl diphosphate (GPP). Also able to catalyze the formation of farnesyl-L-glutamate from farnesyl diphosphate (FPP). Cannot use dimethylallyl diphosphate (DMAPP) as substrate. The chain is Magnesium-dependent glutamate N-prenyltransferase from Pseudo-nitzschia multiseries (Marine planktonic diatom).